Reading from the N-terminus, the 72-residue chain is Translation initiation factor IF-1 2 (72 aa).

One can recognise an S1-like domain in the interval 1–72; it reads MAKEELIEFE…TKGRINYRHK (72 aa).

This sequence belongs to the IF-1 family. In terms of assembly, component of the 30S ribosomal translation pre-initiation complex which assembles on the 30S ribosome in the order IF-2 and IF-3, IF-1 and N-formylmethionyl-tRNA(fMet); mRNA recruitment can occur at any time during PIC assembly.

It localises to the cytoplasm. One of the essential components for the initiation of protein synthesis. Stabilizes the binding of IF-2 and IF-3 on the 30S subunit to which N-formylmethionyl-tRNA(fMet) subsequently binds. Helps modulate mRNA selection, yielding the 30S pre-initiation complex (PIC). Upon addition of the 50S ribosomal subunit IF-1, IF-2 and IF-3 are released leaving the mature 70S translation initiation complex. This chain is Translation initiation factor IF-1 2, found in Ralstonia nicotianae (strain ATCC BAA-1114 / GMI1000) (Ralstonia solanacearum).